The chain runs to 1387 residues: Chromatin-remodeling ATPase INO80 (1387 aa).

Composition is skewed to polar residues over residues 1–24 (MNIS…TATD) and 90–113 (NHQP…TTIS). Disordered regions lie at residues 1 to 45 (MNIS…NGQT), 85 to 113 (TTTA…TTIS), and 230 to 414 (NSTR…LSEA). The segment covering 241–257 (STRKIHKVEHKSRRRKP) has biased composition (basic residues). The span at 283-295 (ATAGTTASANGSD) shows a compositional bias: low complexity. Basic and acidic residues predominate over residues 360–382 (KSQESTGRDHKRVKIENKQEEQQ). Residues 390–401 (ADEEDEAEAEAE) show a composition bias toward acidic residues. Residues 438–563 (IWKDLSRKDG…SHFIGKKIKT (126 aa)) form the DBINO domain. Residues 480–551 (QLKNTKNQKD…KLNFLITQTE (72 aa)) are a coiled coil. Residues 684 to 856 (ANLYEQGING…WALLHFIMPS (173 aa)) enclose the Helicase ATP-binding domain. 697 to 704 (DEMGLGKT) lines the ATP pocket. A DEAQ box motif is present at residues 807–810 (DEAQ). The Helicase C-terminal domain maps to 1240 to 1387 (KLDELLIDLK…EIQKLVVGNM (148 aa)).

The protein belongs to the SNF2/RAD54 helicase family. As to quaternary structure, component of the INO80 chromatin-remodeling complex.

The protein resides in the nucleus. It catalyses the reaction ATP + H2O = ADP + phosphate + H(+). In terms of biological role, ATPase component of the INO80 complex which remodels chromatin by shifting nucleosomes and is involved in DNA repair. In Candida albicans (strain SC5314 / ATCC MYA-2876) (Yeast), this protein is Chromatin-remodeling ATPase INO80 (INO80).